A 96-amino-acid polypeptide reads, in one-letter code: MSRPKKCRHLSCCVPYSLFKPNGIPSTQLEKIQLEADEFEALNLGDVQKMSQLDAAALMGISRQTFGYLLASARKKVATAVTQGQALLLPQIANKD.

It belongs to the UPF0251 family.

In Shewanella pealeana (strain ATCC 700345 / ANG-SQ1), this protein is UPF0251 protein Spea_3639.